The sequence spans 203 residues: A-type ATP synthase subunit E (203 aa).

The protein belongs to the V-ATPase E subunit family. Has multiple subunits with at least A(3), B(3), C, D, E, F, H, I and proteolipid K(x).

The protein resides in the cell membrane. Component of the A-type ATP synthase that produces ATP from ADP in the presence of a proton gradient across the membrane. This is A-type ATP synthase subunit E from Thermococcus sibiricus (strain DSM 12597 / MM 739).